A 492-amino-acid chain; its full sequence is Beta-glucosidase 38 (492 aa).

An N-terminal signal peptide occupies residues 1–21 (MNMPLLLLIAIVVVSLSHGNG). Gln-45 serves as a coordination point for a beta-D-glucoside. Residues Asn-73 and Asn-77 are each glycosylated (N-linked (GlcNAc...) asparagine). Residues His-146 and 191–192 (NE) contribute to the a beta-D-glucoside site. Glu-192 functions as the Proton donor in the catalytic mechanism. Cys-211 and Cys-214 are disulfide-bonded. An N-linked (GlcNAc...) asparagine glycan is attached at Asn-310. Tyr-331 provides a ligand contact to a beta-D-glucoside. Asn-341 is a glycosylation site (N-linked (GlcNAc...) asparagine). Glu-400 serves as a coordination point for a beta-D-glucoside. Glu-400 serves as the catalytic Nucleophile. A glycan (N-linked (GlcNAc...) asparagine) is linked at Asn-408. Residues Trp-447, 454-455 (EW), and Phe-463 each bind a beta-D-glucoside.

The protein belongs to the glycosyl hydrolase 1 family.

The catalysed reaction is Hydrolysis of terminal, non-reducing beta-D-glucosyl residues with release of beta-D-glucose.. This is Beta-glucosidase 38 (BGLU38) from Oryza sativa subsp. japonica (Rice).